The primary structure comprises 870 residues: Valine--tRNA ligase (870 aa).

Residues 1-13 show a composition bias toward polar residues; the sequence is MTSQTFTTSSATP. Residues 1–21 are disordered; that stretch reads MTSQTFTTSSATPPTRGVVPD. Positions 63-73 match the 'HIGH' region motif; that stretch reads PTVSGHLHPGH. Positions 479 to 505 are disordered; it reads YDHPLLPDESALPVDPASQPPSGYQES. A 'KMSKS' region motif is present at residues 595–599; the sequence is KMSKS. Lysine 598 lines the ATP pocket.

This sequence belongs to the class-I aminoacyl-tRNA synthetase family. ValS type 2 subfamily. As to quaternary structure, monomer.

The protein resides in the cytoplasm. The catalysed reaction is tRNA(Val) + L-valine + ATP = L-valyl-tRNA(Val) + AMP + diphosphate. Functionally, catalyzes the attachment of valine to tRNA(Val). As ValRS can inadvertently accommodate and process structurally similar amino acids such as threonine, to avoid such errors, it has a 'posttransfer' editing activity that hydrolyzes mischarged Thr-tRNA(Val) in a tRNA-dependent manner. This chain is Valine--tRNA ligase, found in Cutibacterium acnes (strain DSM 16379 / KPA171202) (Propionibacterium acnes).